A 469-amino-acid polypeptide reads, in one-letter code: Putative dipeptidase SE_1424 (469 aa).

H84 contributes to the Zn(2+) binding site. Residue D86 is part of the active site. Residue D115 participates in Zn(2+) binding. E149 serves as the catalytic Proton acceptor. Residues E150, D173, and H440 each contribute to the Zn(2+) site.

It belongs to the peptidase M20A family. The cofactor is Zn(2+).

In Staphylococcus epidermidis (strain ATCC 12228 / FDA PCI 1200), this protein is Putative dipeptidase SE_1424.